The chain runs to 418 residues: Ras association domain-containing protein 5 (418 aa).

A disordered region spans residues 1–118 (MAMASPAIGQ…QPQDPRVPAE (118 aa)). Ala-2 is subject to N-acetylthreonine. A compositionally biased stretch (low complexity) spans 77–89 (SRPARPLRPGLQQ). The Phorbol-ester/DAG-type zinc-finger motif lies at 122 to 170 (GHCFAELVLPGGPGWCDLCGREVLRQALRCTNCKFTCHPECRSLIQLDC). A phosphoserine mark is found at Ser-182 and Ser-279. The Ras-associating domain occupies 274 to 364 (TDKRTSFYLP…LSFVLKENET (91 aa)). A Phosphothreonine modification is found at Thr-352. Positions 366-413 (EVEWDAFSIPELQNFLTILEKEEQDKIQQVQKKYDKFRQKLEEALRES) constitute an SARAH domain.

Interacts directly with activated HRAS; a RASSF5-STK4/MST1 complex probably associates with activated HRAS. Interacts with KRAS. Probably interacts with Ras-like GTPases RRAS, MRAS, RAP1B, RAP2A and RALA. Interacts with RRAS2. Can self-associate. Interacts with RSSF1 isoform A. The RSSF1 isoform A-RSSF5 heterodimer probably mediates the association of RSSF1 with HRAS. Isoform 2 interacts with activated RAP1A and ITGAL/LFA-1. Binds STK4/MST1, inhibiting STK4/MST1 autoactivation. As to expression, widely expressed. Frequently down-regulated in lung tumor cell lines and primary lung tumors.

It is found in the cytoplasm. The protein localises to the cytoskeleton. Potential tumor suppressor. Seems to be involved in lymphocyte adhesion by linking RAP1A activation upon T-cell receptor or chemokine stimulation to integrin activation. Isoform 2 stimulates lymphocyte polarization and the patch-like distribution of ITGAL/LFA-1, resulting in an enhanced adhesion to ICAM1. Together with RAP1A may participate in regulation of microtubule growth. The association of isoform 2 with activated RAP1A is required for directional movement of endothelial cells during wound healing. May be involved in regulation of Ras apoptotic function. The RASSF5-STK4/MST1 complex may mediate HRAS and KRAS induced apoptosis. The polypeptide is Ras association domain-containing protein 5 (RASSF5) (Homo sapiens (Human)).